The sequence spans 452 residues: Matrilin-3 (452 aa).

Residues 1–24 (MRRALGTLGCCLALLLPLLPAARG) form the signal peptide. Residues 54–229 (DLVFIIDSSR…GVIEKLTSKF (176 aa)) form the VWFA domain. EGF-like domains lie at 235 to 275 (AANT…RTCS), 276 to 316 (AVDV…KTCS), 317 to 357 (AMDV…KTCS), and 358 to 398 (AVDV…KTCS). 12 disulfide bridges follow: Cys239/Cys250, Cys246/Cys259, Cys261/Cys274, Cys280/Cys291, Cys287/Cys300, Cys302/Cys315, Cys321/Cys332, Cys328/Cys341, Cys343/Cys356, Cys362/Cys373, Cys369/Cys382, and Cys384/Cys397. The N-linked (GlcNAc...) asparagine glycan is linked to Asn295. The stretch at 419–451 (ALQDSVTSRLEALSTKLDEVSQKLQAYQDRQQV) forms a coiled coil.

Can form homooligomers (monomers, dimers, trimers and tetramers) and heterooligomers with matrilin-1. In terms of tissue distribution, expression is restricted to cartilaginous tissues.

It localises to the secreted. Its function is as follows. Major component of the extracellular matrix of cartilage and may play a role in the formation of extracellular filamentous networks. In Gallus gallus (Chicken), this protein is Matrilin-3 (MATN3).